Reading from the N-terminus, the 130-residue chain is Arsenate reductase 2.2 (130 aa).

In terms of domain architecture, Rhodanese spans R18 to R119. C70 serves as the catalytic Cysteine persulfide intermediate.

The catalysed reaction is [glutaredoxin]-dithiol + arsenate + glutathione + H(+) = glutathionyl-S-S-[glutaredoxin] + arsenite + H2O. Its function is as follows. Possesses arsenate reductase activity in vitro. Catalyzes the reduction of arsenate [As(V)] to arsenite [As(III)]. May play a role in arsenic retention in roots. Possesses phosphatase activity towards p-nitrophenyl phosphate in vitro. The protein is Arsenate reductase 2.2 (ACR2.2) of Oryza sativa subsp. japonica (Rice).